The primary structure comprises 528 residues: Beta-galactoside alpha-2,6-sialyltransferase 2 (528 aa).

At 1–10 (MKPNLKQWKQ) the chain is on the cytoplasmic side. A helical; Signal-anchor for type II membrane protein membrane pass occupies residues 11–31 (LMLFGIFAWGLLFLVIFIYFT). At 32–528 (DSNSAEPVPS…CPERNNFPPL (497 aa)) the chain is on the lumenal side. Asn167, Asn308, and Asn338 each carry an N-linked (GlcNAc...) asparagine glycan. Intrachain disulfides connect Cys254-Cys519, Cys297-Cys448, and Cys466-Cys477.

This sequence belongs to the glycosyltransferase 29 family.

Its subcellular location is the golgi apparatus. The protein localises to the golgi stack membrane. It catalyses the reaction a beta-D-galactoside + CMP-N-acetyl-beta-neuraminate = an N-acetyl-alpha-neuraminyl-(2-&gt;6)-beta-D-galactosyl derivative + CMP + H(+). Transfers sialic acid from the donor of substrate CMP-sialic acid to galactose containing acceptor substrates. This Gallus gallus (Chicken) protein is Beta-galactoside alpha-2,6-sialyltransferase 2 (ST6GAL2).